A 117-amino-acid polypeptide reads, in one-letter code: Immunoglobulin heavy variable 1-69-2 (117 aa).

The N-terminal stretch at 1-19 (MDCTWRILLLVAAATGTHA) is a signal peptide. The framework-1 stretch occupies residues 20–44 (EVQLVQSGAEVKKPGATVKISCKVS). One can recognise an Ig-like domain in the interval 20 to 117 (EVQLVQSGAE…EDTAVYYCAT (98 aa)). An intrachain disulfide couples Cys-41 to Cys-115. The interval 45-52 (GYTFTDYY) is complementarity-determining-1. Residues 53-69 (MHWVQQAPGKGLEWMGL) are framework-2. A complementarity-determining-2 region spans residues 70–77 (VDPEDGET). A framework-3 region spans residues 78–115 (IYAEKFQGRVTITADTSTDTAYMELSSLRSEDTAVYYC). The segment at 116 to 117 (AT) is complementarity-determining-3.

As to quaternary structure, immunoglobulins are composed of two identical heavy chains and two identical light chains; disulfide-linked.

The protein localises to the secreted. Its subcellular location is the cell membrane. Functionally, v region of the variable domain of immunoglobulin heavy chains that participates in the antigen recognition. Immunoglobulins, also known as antibodies, are membrane-bound or secreted glycoproteins produced by B lymphocytes. In the recognition phase of humoral immunity, the membrane-bound immunoglobulins serve as receptors which, upon binding of a specific antigen, trigger the clonal expansion and differentiation of B lymphocytes into immunoglobulins-secreting plasma cells. Secreted immunoglobulins mediate the effector phase of humoral immunity, which results in the elimination of bound antigens. The antigen binding site is formed by the variable domain of one heavy chain, together with that of its associated light chain. Thus, each immunoglobulin has two antigen binding sites with remarkable affinity for a particular antigen. The variable domains are assembled by a process called V-(D)-J rearrangement and can then be subjected to somatic hypermutations which, after exposure to antigen and selection, allow affinity maturation for a particular antigen. The protein is Immunoglobulin heavy variable 1-69-2 of Homo sapiens (Human).